The chain runs to 66 residues: Large ribosomal subunit protein bL33c (66 aa).

It belongs to the bacterial ribosomal protein bL33 family.

It is found in the plastid. Its subcellular location is the chloroplast. This chain is Large ribosomal subunit protein bL33c, found in Acorus calamus (Sweet flag).